Reading from the N-terminus, the 675-residue chain is Metal-nicotianamine transporter YSL3 (675 aa).

Helical transmembrane passes span 42–62 (ITFR…VIVM), 66–86 (LTTG…FVFL), 114–134 (CAVA…LLGL), 159–179 (GIGW…LALV), 219–239 (VFGF…QWFF), 280–300 (IVNI…WPLI), 325–345 (VFIS…KILF), 386–406 (IPLW…IIAI), 408–428 (IMFP…APSL), 450–470 (VALF…AGLV), 504–524 (VSQA…FFLF), 556–576 (FSAL…FAVA), 602–622 (FLVG…VFAW), and 630–650 (AGLM…LWIL).

It belongs to the YSL (TC 2.A.67.2) family. In terms of tissue distribution, expressed in leaves, anthers and pollen grains. Restricted to the vasculature.

It is found in the membrane. In terms of biological role, may be involved in the lateral transport of nicotianamine-chelated metals in the vasculature. In Arabidopsis thaliana (Mouse-ear cress), this protein is Metal-nicotianamine transporter YSL3 (YSL3).